The chain runs to 143 residues: Transcriptional regulator SlyA (143 aa).

In terms of domain architecture, HTH marR-type spans Glu-2–Lys-135. Residues Gln-49–Glu-72 constitute a DNA-binding region (H-T-H motif).

It belongs to the SlyA family. In terms of assembly, homodimer.

Its function is as follows. Transcription regulator that can specifically activate or repress expression of target genes. This Yersinia pestis (strain Pestoides F) protein is Transcriptional regulator SlyA.